The chain runs to 123 residues: Small ribosomal subunit protein uS12c (123 aa).

Residues 103 to 123 form a disordered region; sequence AAGVKNRKQSRSKYGAKKPKE. A compositionally biased stretch (basic residues) spans 107 to 123; it reads KNRKQSRSKYGAKKPKE.

The protein belongs to the universal ribosomal protein uS12 family. Part of the 30S ribosomal subunit.

Its subcellular location is the plastid. It is found in the chloroplast. Functionally, with S4 and S5 plays an important role in translational accuracy. Located at the interface of the 30S and 50S subunits. The polypeptide is Small ribosomal subunit protein uS12c (rps12) (Guillardia theta (Cryptophyte)).